Consider the following 1023-residue polypeptide: NLR family CARD domain-containing protein 4 (1023 aa).

Residues 1–88 (MNFIKENSQA…PVYQDLTGHS (88 aa)) enclose the CARD domain. The segment at 95 to 298 (EEDLDVLAQS…HVGALTVEVG (204 aa)) is nucleotide-binding domain (NBD). The 314-residue stretch at 163–476 (SPCLIEGESG…VSKGNSYLKK (314 aa)) folds into the NACHT domain. 169–176 (GESGKGKS) provides a ligand contact to ATP. The interval 356–463 (AHTQTMLFQT…RLSSLLKSRE (108 aa)) is winged-helix domain (WHD). At S533 the chain carries Phosphoserine. LRR repeat units lie at residues 578–598 (FFQG…LFDF), 655–678 (MQKF…DIKY), 734–757 (VTDL…LADS), 761–784 (LKNL…SLAE), 786–811 (LRNL…DYIV), 823–846 (EMKL…LHNL), 847–869 (VKLS…ALQG), 877–901 (LEQL…LLKQ), 910–932 (KLGL…FLEM), 935–962 (LRDL…VFEN), 964–984 (KQLV…ALVR), and 998–1020 (EARL…TFKL).

In terms of assembly, homooligomer; homooligomerizes following activation of Naip proteins by pathogenic proteins such as S.typhimurium (Salmonella) flagellin or PrgJ. Component of the NLRC4 inflammasome, at least composed of NLRC4, caspase-1 (CASP1) and some NAIP family member. Interacts with EIF2AK2/PKR. Phosphorylated at Ser-533 following infection of macrophages with S.typhimurium (Salmonella). Phosphorylation is essential for NLRC4 inflammasome function to promote caspase-1 activation and pyroptosis. PRKCD phosphorylates Ser-533 in vitro.

It is found in the cytoplasm. Its subcellular location is the cytosol. In terms of biological role, key component of inflammasomes that indirectly senses specific proteins from pathogenic bacteria and fungi and responds by assembling an inflammasome complex that promotes caspase-1 activation, cytokine production and macrophage pyroptosis. The NLRC4 inflammasome is activated as part of the innate immune response to a range of intracellular bacteria. This Rattus norvegicus (Rat) protein is NLR family CARD domain-containing protein 4 (Nlrc4).